Consider the following 157-residue polypeptide: uncharacterized protein (157 aa).

This is an uncharacterized protein from Bacillus subtilis (strain 168).